A 947-amino-acid chain; its full sequence is Vacuolar membrane protease (947 aa).

Topologically, residues 1–15 (MRFKALLRAIFRFRK) are cytoplasmic. Residues 16-36 (TNFSILLIITYAIIIALLVFD) form a helical membrane-spanning segment. At 37–358 (RSRYKLDLPN…GLFFVVVDTK (322 aa)) the chain is on the vacuolar side. Residues Asn46, Asn92, Asn108, and Asn121 are each glycosylated (N-linked (GlcNAc...) asparagine). The Zn(2+) site is built by His156 and Asp168. Glu200 (proton acceptor) is an active-site residue. Zn(2+)-binding residues include Glu201, Glu226, and His300. Asn319 carries N-linked (GlcNAc...) asparagine glycosylation. The chain crosses the membrane as a helical span at residues 359-379 (HLFYADIFMLIVGPILLMMKA). Over 380–391 (HLDKRRRLERSR) the chain is Cytoplasmic. Residues 392–412 (LVQLRLLLSLGLSVVFLLLLT) traverse the membrane as a helical segment. At 413-428 (KSLNSFNPFVYSADYR) the chain is on the vacuolar side. The helical transmembrane segment at 429 to 449 (TPLTGLFLLFVTVNYLIVTLA) threads the bilayer. Residues 450 to 458 (ERLNPTESY) are Cytoplasmic-facing. The chain crosses the membrane as a helical span at residues 459 to 479 (KTVAINQIFIIAWLMQLYITL). At 480 to 489 (RMAKSDFTLT) the chain is on the vacuolar side. A helical membrane pass occupies residues 490-510 (GTYPLSIFSGCLIVALSLGLF). The Cytoplasmic segment spans residues 511 to 601 (GTKNKAVNDA…DKNSDFSKHY (91 aa)). 2 stretches are compositionally biased toward polar residues: residues 522–531 (NSSVRYASSQ) and 546–567 (NINQ…TDLH). The disordered stretch occupies residues 522-573 (NSSVRYASSQNDEDNPLPSQDRGENINQVRDTGNQEVTSNTNTDLHSNAEEV). Residues 602–622 (NWIVQFLCIVPISSFIFLFSL) traverse the membrane as a helical segment. Over 623 to 641 (DYTLDAIHKMVQETTDDVQ) the chain is Vacuolar. Residues 642–662 (LICIIITIGVILLALPILPFI) form a helical membrane-spanning segment. The Cytoplasmic portion of the chain corresponds to 663 to 669 (SKLNYQS). Residues 670 to 690 (SVIIAIIGVLLFGKSLVMQPF) traverse the membrane as a helical segment. The Vacuolar segment spans residues 691 to 947 (SEIAPLKVRF…LVVIKDKIQL (257 aa)). 4 N-linked (GlcNAc...) asparagine glycosylation sites follow: Asn742, Asn784, Asn801, and Asn833.

Belongs to the peptidase M28 family. It depends on Zn(2+) as a cofactor.

Its subcellular location is the vacuole membrane. Its function is as follows. May be involved in vacuolar sorting and osmoregulation. This chain is Vacuolar membrane protease, found in Candida glabrata (strain ATCC 2001 / BCRC 20586 / JCM 3761 / NBRC 0622 / NRRL Y-65 / CBS 138) (Yeast).